The primary structure comprises 338 residues: Lipoate-protein ligase A (338 aa).

Residues 29–216 enclose the BPL/LPL catalytic domain; the sequence is PATQRVLFLW…AFFAHYGERV (188 aa). Residues Arg71, 76 to 79, and Lys134 each bind ATP; that span reads GAVF. A (R)-lipoate-binding site is contributed by Lys134.

It belongs to the LplA family. In terms of assembly, monomer.

Its subcellular location is the cytoplasm. It carries out the reaction L-lysyl-[lipoyl-carrier protein] + (R)-lipoate + ATP = N(6)-[(R)-lipoyl]-L-lysyl-[lipoyl-carrier protein] + AMP + diphosphate + H(+). It participates in protein modification; protein lipoylation via exogenous pathway; protein N(6)-(lipoyl)lysine from lipoate: step 1/2. The protein operates within protein modification; protein lipoylation via exogenous pathway; protein N(6)-(lipoyl)lysine from lipoate: step 2/2. Catalyzes both the ATP-dependent activation of exogenously supplied lipoate to lipoyl-AMP and the transfer of the activated lipoyl onto the lipoyl domains of lipoate-dependent enzymes. This Escherichia coli O6:H1 (strain CFT073 / ATCC 700928 / UPEC) protein is Lipoate-protein ligase A.